Here is a 174-residue protein sequence, read N- to C-terminus: ATP synthase subunit delta (174 aa).

It belongs to the ATPase delta chain family. In terms of assembly, F-type ATPases have 2 components, F(1) - the catalytic core - and F(0) - the membrane proton channel. F(1) has five subunits: alpha(3), beta(3), gamma(1), delta(1), epsilon(1). F(0) has three main subunits: a(1), b(2) and c(10-14). The alpha and beta chains form an alternating ring which encloses part of the gamma chain. F(1) is attached to F(0) by a central stalk formed by the gamma and epsilon chains, while a peripheral stalk is formed by the delta and b chains.

The protein localises to the cell inner membrane. F(1)F(0) ATP synthase produces ATP from ADP in the presence of a proton or sodium gradient. F-type ATPases consist of two structural domains, F(1) containing the extramembraneous catalytic core and F(0) containing the membrane proton channel, linked together by a central stalk and a peripheral stalk. During catalysis, ATP synthesis in the catalytic domain of F(1) is coupled via a rotary mechanism of the central stalk subunits to proton translocation. Functionally, this protein is part of the stalk that links CF(0) to CF(1). It either transmits conformational changes from CF(0) to CF(1) or is implicated in proton conduction. The sequence is that of ATP synthase subunit delta from Francisella philomiragia subsp. philomiragia (strain ATCC 25017 / CCUG 19701 / FSC 153 / O#319-036).